A 197-amino-acid polypeptide reads, in one-letter code: uncharacterized protein (197 aa).

6 consecutive transmembrane segments (helical) span residues 5 to 23 (LNLLIFFIAALLIALGLRF), 27 to 46 (ISFAGLILLLAVVPALMLRF), 55 to 77 (VIAGIFVLGLALNALIGVALAYT), 87 to 109 (LSLLPLTLVLTANVFATSLVIRI), 116 to 138 (VFAFYFWFLISVGLAFLFLLPTG), and 153 to 174 (FVEFPILYSELALIPSAFCLVF).

It is found in the cell membrane. This is an uncharacterized protein from Archaeoglobus fulgidus (strain ATCC 49558 / DSM 4304 / JCM 9628 / NBRC 100126 / VC-16).